Here is a 138-residue protein sequence, read N- to C-terminus: Photosystem II extrinsic protein U (138 aa).

An N-terminal signal peptide occupies residues 1-28; it reads MSRVVSALMGLVLMFGCAFFSVQPQAQA. Positions 29–42 are excised as a propeptide; it reads LDLSNGFVSAAVLG.

This sequence belongs to the PsbU family. In terms of assembly, PSII is composed of 1 copy each of membrane proteins PsbA, PsbB, PsbC, PsbD, PsbE, PsbF, PsbH, PsbI, PsbJ, PsbK, PsbL, PsbM, PsbT, PsbX, PsbY, PsbZ, Psb30/Ycf12, peripheral proteins PsbO, CyanoQ (PsbQ), PsbU, PsbV and a large number of cofactors. It forms dimeric complexes.

The protein localises to the cellular thylakoid membrane. One of the extrinsic, lumenal subunits of photosystem II (PSII). PSII is a light-driven water plastoquinone oxidoreductase, using light energy to abstract electrons from H(2)O, generating a proton gradient subsequently used for ATP formation. The extrinsic proteins stabilize the structure of photosystem II oxygen-evolving complex (OEC), the ion environment of oxygen evolution and protect the OEC against heat-induced inactivation. This chain is Photosystem II extrinsic protein U, found in Picosynechococcus sp. (strain ATCC 27264 / PCC 7002 / PR-6) (Agmenellum quadruplicatum).